A 200-amino-acid polypeptide reads, in one-letter code: Holliday junction branch migration complex subunit RuvA (200 aa).

Positions 1–63 (MIGKLSGKID…EEHIHLYGFL (63 aa)) are domain I. Residues 64-142 (TLEEKNFFNL…KIFSSSAIIK (79 aa)) form a domain II region. The flexible linker stretch occupies residues 142–146 (KDSSN). A domain III region spans residues 147-200 (ISSVEINEVIKALVNLGFTRFEAQNTVQGIITQNTKISIDELIKTALKNRNSSF).

It belongs to the RuvA family. Homotetramer. Forms an RuvA(8)-RuvB(12)-Holliday junction (HJ) complex. HJ DNA is sandwiched between 2 RuvA tetramers; dsDNA enters through RuvA and exits via RuvB. An RuvB hexamer assembles on each DNA strand where it exits the tetramer. Each RuvB hexamer is contacted by two RuvA subunits (via domain III) on 2 adjacent RuvB subunits; this complex drives branch migration. In the full resolvosome a probable DNA-RuvA(4)-RuvB(12)-RuvC(2) complex forms which resolves the HJ.

It localises to the cytoplasm. In terms of biological role, the RuvA-RuvB-RuvC complex processes Holliday junction (HJ) DNA during genetic recombination and DNA repair, while the RuvA-RuvB complex plays an important role in the rescue of blocked DNA replication forks via replication fork reversal (RFR). RuvA specifically binds to HJ cruciform DNA, conferring on it an open structure. The RuvB hexamer acts as an ATP-dependent pump, pulling dsDNA into and through the RuvAB complex. HJ branch migration allows RuvC to scan DNA until it finds its consensus sequence, where it cleaves and resolves the cruciform DNA. The protein is Holliday junction branch migration complex subunit RuvA of Rickettsia typhi (strain ATCC VR-144 / Wilmington).